A 438-amino-acid polypeptide reads, in one-letter code: Serine hydroxymethyltransferase (438 aa).

(6S)-5,6,7,8-tetrahydrofolate-binding positions include L133 and 137–139 (GHL). At K242 the chain carries N6-(pyridoxal phosphate)lysine.

The protein belongs to the SHMT family. Homodimer. Pyridoxal 5'-phosphate serves as cofactor.

It localises to the cytoplasm. The enzyme catalyses (6R)-5,10-methylene-5,6,7,8-tetrahydrofolate + glycine + H2O = (6S)-5,6,7,8-tetrahydrofolate + L-serine. It participates in one-carbon metabolism; tetrahydrofolate interconversion. It functions in the pathway amino-acid biosynthesis; glycine biosynthesis; glycine from L-serine: step 1/1. Catalyzes the reversible interconversion of serine and glycine with tetrahydrofolate (THF) serving as the one-carbon carrier. This reaction serves as the major source of one-carbon groups required for the biosynthesis of purines, thymidylate, methionine, and other important biomolecules. Also exhibits THF-independent aldolase activity toward beta-hydroxyamino acids, producing glycine and aldehydes, via a retro-aldol mechanism. In Brucella suis (strain ATCC 23445 / NCTC 10510), this protein is Serine hydroxymethyltransferase.